The primary structure comprises 340 residues: CRISPR-associated protein Cas7 (340 aa).

Component of the Cascade-like complex (Cascade I-B), composed of Cas5, Cas6, Cas7 and crRNA.

It is found in the cytoplasm. Functionally, CRISPR (clustered regularly interspaced short palindromic repeat) is an adaptive immune system that provides protection against mobile genetic elements (viruses, transposable elements and conjugative plasmids). CRISPR clusters contain sequences complementary to antecedent mobile elements and target invading nucleic acids. CRISPR clusters are transcribed and processed into CRISPR RNA (crRNA). Plasmid targeted by CRISPR locus P1 transform wild-type cells very poorly. This protein helps process or stabilize pre-crRNA into individual crRNA units, in vivo Cas6 and Cas7 are also required for optimal crRNA processing and/or stability. The protein is CRISPR-associated protein Cas7 of Haloferax volcanii (strain ATCC 29605 / DSM 3757 / JCM 8879 / NBRC 14742 / NCIMB 2012 / VKM B-1768 / DS2) (Halobacterium volcanii).